The chain runs to 421 residues: POU domain, class 4, transcription factor 1 (421 aa).

Positions 57 to 66 (RAEALAAVDI) match the POU-IV box motif. Disordered regions lie at residues 94–117 (STVPLAHHHHHHHHHQALEPGDLL) and 133–200 (GAGA…GLGH). Residues 99–108 (AHHHHHHHHH) are compositionally biased toward basic residues. Positions 133-186 (GAGAAGGGGGAHDGPGGGGGPGGGGGPGGGGPGGGGGGGGPGGGGGGPGGGLLG) are enriched in gly residues. The region spanning 262 to 339 (DSDTDPRELE…ILQAWLEEAE (78 aa)) is the POU-specific domain. The segment at residues 357-416 (KKRKRTSIAAPEKRSLEAYFAVQPRPSSEKIAAIAEKLDLKKNVVRVWFCNQRQKQKRMK) is a DNA-binding region (homeobox).

It belongs to the POU transcription factor family. Class-4 subfamily. In terms of assembly, interacts (via N-terminus) with RIT2; the interaction controls POU4F1 transactivation activity on some neuronal target genes. Isoform 1 interacts with POU4F2 isoform 2; this interaction inhibits both POU4F1 DNA-binding and transcriptional activities. Isoform 1 interacts (C-terminus) with ESR1 (via DNA-binding domain); this interaction decreases the estrogen receptor ESR1 transcriptional activity in a DNA- and ligand 17-beta-estradiol-independent manner. As to expression, expressed in mature osteoclasts (at protein level). Brain, peripheral sensory nervous system and retina. In the adult nervous system, predominates in the medial habenula, superficial gray of the superior colliculus, red nucleus, mesencephalic nucleus of the trigeminal ganglion, nucleus ambiguus, inferior olivary nucleus, and peripheral sensory ganglia.

The protein localises to the nucleus. It is found in the cytoplasm. In terms of biological role, multifunctional transcription factor with different regions mediating its different effects. Acts by binding (via its C-terminal domain) to sequences related to the consensus octamer motif 5'-ATGCAAAT-3' in the regulatory regions of its target genes. Regulates the expression of specific genes involved in differentiation and survival within a subset of neuronal lineages. It has been shown that activation of some of these genes requires its N-terminal domain, maybe through a neuronal-specific cofactor. Activates BCL2 expression and protects neuronal cells from apoptosis (via the N-terminal domain). Induces neuronal process outgrowth and the coordinate expression of genes encoding synaptic proteins. Exerts its major developmental effects in somatosensory neurons and in brainstem nuclei involved in motor control. Stimulates the binding affinity of the nuclear estrogene receptor ESR1 to DNA estrogen response element (ERE), and hence modulates ESR1-induced transcriptional activity. May positively regulate POU4F2 and POU4F3. Regulates dorsal root ganglion sensory neuron specification and axonal projection into the spinal cord. Plays a role in TNFSF11-mediated terminal osteoclast differentiation. Negatively regulates its own expression interacting directly with a highly conserved autoregulatory domain surrounding the transcription initiation site. Able to act as transcription factor, cannot regulate the expression of the same subset of genes than isoform 1. Does not have antiapoptotic effect on neuronal cells. The polypeptide is POU domain, class 4, transcription factor 1 (Pou4f1) (Mus musculus (Mouse)).